Reading from the N-terminus, the 434-residue chain is Arrestin domain-containing protein 1 (434 aa).

The interval 295 to 345 is disordered; it reads PGPGSSPGLLSPVVPSAPPQEEAEAVASGPHFSDPVSLSTKSHSQQQPLST. Residues 330–342 show a composition bias toward polar residues; it reads VSLSTKSHSQQQP. 2 short sequence motifs (PPxY motif) span residues 401 to 404 and 414 to 417; these read PPEY and PPSY.

The protein belongs to the arrestin family. As to quaternary structure, interacts (via PPxY motifs) with ITCH (via WW domains); the interaction is direct and participates in the recruitment of the ubiquitin-protein ligase ITCH to the NOTCH1 receptor. Interacts with ARRB1 and ARRB2; the interaction is direct. Interacts with TSG101; may recruit TSG101 to the plasma membrane. Interacts (via PPxY motifs) with WWP2 (via WW domains); ubiquitinates ARRDC1. Interacts with SLC11A2; controls the incorporation of SLC11A2 into extracellular vesicles through an ubiquitination-dependent mechanism. Interacts with WWP1 (via WW domains). Interacts with NEDD4 (via WW domains). Interacts with PDCD6IP. In terms of processing, ubiquitinated. Ubiquitination by WWP2; promotes localization to extracellular microvesicles. Ubiquitinated by WWP1.

The protein resides in the cell membrane. Its function is as follows. Functions as an adapter recruiting ubiquitin-protein ligases to their specific substrates. Through an ubiquitination-dependent mechanism plays for instance a role in the incorporation of SLC11A2 into extracellular vesicles. More generally, plays a role in the extracellular transport of proteins between cells through the release in the extracellular space of microvesicles. By participating in the ITCH-mediated ubiquitination and subsequent degradation of NOTCH1, negatively regulates the NOTCH signaling pathway. This is Arrestin domain-containing protein 1 from Rattus norvegicus (Rat).